We begin with the raw amino-acid sequence, 337 residues long: 1-aminocyclopropane-1-carboxylate deaminase (337 aa).

An N6-(pyridoxal phosphate)lysine modification is found at Lys50. Ser77 functions as the Nucleophile in the catalytic mechanism.

It belongs to the ACC deaminase/D-cysteine desulfhydrase family. Homotrimer. Requires pyridoxal 5'-phosphate as cofactor.

It carries out the reaction 1-aminocyclopropane-1-carboxylate + H2O = 2-oxobutanoate + NH4(+). Functionally, catalyzes a cyclopropane ring-opening reaction, the irreversible conversion of 1-aminocyclopropane-1-carboxylate (ACC) to ammonia and alpha-ketobutyrate. Allows growth on ACC as a nitrogen source. The polypeptide is 1-aminocyclopropane-1-carboxylate deaminase (Methylobacterium sp. (strain 4-46)).